The sequence spans 385 residues: Alkanesulfonate monooxygenase (385 aa).

It belongs to the SsuD family.

It catalyses the reaction an alkanesulfonate + FMNH2 + O2 = an aldehyde + FMN + sulfite + H2O + 2 H(+). Catalyzes the desulfonation of aliphatic sulfonates. The sequence is that of Alkanesulfonate monooxygenase from Burkholderia pseudomallei (strain 1710b).